The following is a 306-amino-acid chain: MLIDRFGRPVTNLRISLTKECNLNCFYCHREGQLDGERTMKPEEIERIVRIASRLGIKKVKLTGGEPTIRKDIVEIIRRIRPYVVDLSLTTNGTTLYTLAEELKEAGLDRVNISLDTLDRKKYKMITGFDVLDQVIKGIEKATKLFYPVKLNMVVMRGINDDEIWDLIRFAGKVNAILQLIEIEVPREMENSQFFKDFFYPLKPLEEEFEKIAVEIRERRMHRRRKYFLPVDGKVVEVEVVRSMHNTVFCMNCTRLRLTADGYLKTCLLRRDDLIDILGPLRNGASDAELVDIFKRAVLMRRPYWT.

The Radical SAM core domain maps to 5–232 (RFGRPVTNLR…RRRKYFLPVD (228 aa)). A GTP-binding site is contributed by Arg14. [4Fe-4S] cluster is bound by residues Cys21 and Cys25. S-adenosyl-L-methionine is bound at residue Tyr27. Cys28 contacts [4Fe-4S] cluster. Position 61 (Lys61) interacts with GTP. Position 65 (Gly65) interacts with S-adenosyl-L-methionine. Thr90 contributes to the GTP binding site. Ser114 serves as a coordination point for S-adenosyl-L-methionine. Residue Lys150 participates in GTP binding. Met189 contacts S-adenosyl-L-methionine. [4Fe-4S] cluster is bound by residues Cys250 and Cys253. 255 to 257 (RLR) provides a ligand contact to GTP. Position 267 (Cys267) interacts with [4Fe-4S] cluster.

Belongs to the radical SAM superfamily. MoaA family. The cofactor is [4Fe-4S] cluster.

The catalysed reaction is GTP + AH2 + S-adenosyl-L-methionine = (8S)-3',8-cyclo-7,8-dihydroguanosine 5'-triphosphate + 5'-deoxyadenosine + L-methionine + A + H(+). The protein operates within cofactor biosynthesis; molybdopterin biosynthesis. Its function is as follows. Catalyzes the cyclization of GTP to (8S)-3',8-cyclo-7,8-dihydroguanosine 5'-triphosphate. The polypeptide is Probable GTP 3',8-cyclase (Pyrococcus abyssi (strain GE5 / Orsay)).